Reading from the N-terminus, the 423-residue chain is ATP-citrate synthase alpha chain protein 1 (423 aa).

Asn343, Thr345, and Arg376 together coordinate citrate.

It belongs to the succinate/malate CoA ligase beta subunit family. As to quaternary structure, heterooctamer of 4 alpha and 4 beta chains. Expressed in trichomes, epidermal leaf cells, anther tapetal cells, stigma and in young vascular bundles of expanding leaves, cotyledons, roots, pedicel of flowers and siliques.

It is found in the cytoplasm. The protein localises to the cytosol. The catalysed reaction is oxaloacetate + acetyl-CoA + ADP + phosphate = citrate + ATP + CoA. Its function is as follows. ATP citrate-lyase is the primary enzyme responsible for the synthesis of cytosolic acetyl-CoA, used for the elongation of fatty acids and biosynthesis of isoprenoids, flavonoids and malonated derivatives. May supply substrate to the cytosolic acetyl-CoA carboxylase, which generates the malonyl-CoA used for the synthesis of a multitude of compounds, including very long chain fatty acids and flavonoids. Required for normal growth and development and elongation of C18 fatty acids to C20 to C24 fatty acids in seeds. In contrast to all known animal ACL enzymes having a homomeric structure, plant ACLs are composed of alpha and beta chains. The chain is ATP-citrate synthase alpha chain protein 1 (ACLA-1) from Arabidopsis thaliana (Mouse-ear cress).